Consider the following 451-residue polypeptide: UPF0210 protein CLL_A1718 (451 aa).

The protein belongs to the UPF0210 family. In terms of assembly, homodimer.

This chain is UPF0210 protein CLL_A1718, found in Clostridium botulinum (strain Eklund 17B / Type B).